A 362-amino-acid polypeptide reads, in one-letter code: Phosphoserine aminotransferase (362 aa).

Residues Ser-9 and Arg-42 each coordinate L-glutamate. Pyridoxal 5'-phosphate-binding positions include Gly-76–Arg-77, Trp-102, Thr-153, Asp-174, and Gln-197. Residue Lys-198 is modified to N6-(pyridoxal phosphate)lysine. Asn-239–Thr-240 serves as a coordination point for pyridoxal 5'-phosphate.

Belongs to the class-V pyridoxal-phosphate-dependent aminotransferase family. SerC subfamily. Homodimer. Pyridoxal 5'-phosphate serves as cofactor.

The protein localises to the cytoplasm. It carries out the reaction O-phospho-L-serine + 2-oxoglutarate = 3-phosphooxypyruvate + L-glutamate. The catalysed reaction is 4-(phosphooxy)-L-threonine + 2-oxoglutarate = (R)-3-hydroxy-2-oxo-4-phosphooxybutanoate + L-glutamate. It functions in the pathway amino-acid biosynthesis; L-serine biosynthesis; L-serine from 3-phospho-D-glycerate: step 2/3. Its pathway is cofactor biosynthesis; pyridoxine 5'-phosphate biosynthesis; pyridoxine 5'-phosphate from D-erythrose 4-phosphate: step 3/5. Catalyzes the reversible conversion of 3-phosphohydroxypyruvate to phosphoserine and of 3-hydroxy-2-oxo-4-phosphonooxybutanoate to phosphohydroxythreonine. This is Phosphoserine aminotransferase from Escherichia fergusonii (strain ATCC 35469 / DSM 13698 / CCUG 18766 / IAM 14443 / JCM 21226 / LMG 7866 / NBRC 102419 / NCTC 12128 / CDC 0568-73).